We begin with the raw amino-acid sequence, 318 residues long: Olfactory receptor 52D1 (318 aa).

The Extracellular segment spans residues 1–28; sequence MSDSNLSDNHLPDTFFLTGIPGLEAAHF. N5 carries N-linked (GlcNAc...) asparagine glycosylation. A helical transmembrane segment spans residues 29–49; it reads WIAIPFCAMYLVALVGNAALI. The Cytoplasmic portion of the chain corresponds to 50 to 57; that stretch reads LVIAMDNA. A helical membrane pass occupies residues 58–78; it reads LHAPMYLFLCLLSLTDLALSS. At 79 to 102 the chain is on the extracellular side; the sequence is TTVPKMLAILWLHAGEISFGGCLA. Residues C100 and C192 are joined by a disulfide bond. Residues 103–123 form a helical membrane-spanning segment; sequence QMFCVHSIYALESSILLAMAF. The Cytoplasmic segment spans residues 124 to 142; the sequence is DRYVAICNPLRYTTILNHA. Residues 143-163 traverse the membrane as a helical segment; sequence VIGRIGFVGLFRSVAIVSPFI. Topologically, residues 164 to 199 are extracellular; that stretch reads FLLRRLPYCGHRVMTHTYCEHMGIARLACANITVNI. Residues 200–220 form a helical membrane-spanning segment; that stretch reads VYGLTVALLAMGLDSILIAIS. The Cytoplasmic segment spans residues 221-240; sequence YGFILHAVFHLPSHDAQHKA. The chain crosses the membrane as a helical span at residues 241 to 261; it reads LSTCGSHIGIILVFYIPAFFS. Topologically, residues 262–277 are extracellular; it reads FLTHRFGHHEVPKHVH. A helical membrane pass occupies residues 278-298; the sequence is IFLANLYVLVPPVLNPILYGA. The Cytoplasmic portion of the chain corresponds to 299 to 318; the sequence is RTKEIRSRLLKLLHLGKTSI.

It belongs to the G-protein coupled receptor 1 family.

It localises to the cell membrane. Odorant receptor. This chain is Olfactory receptor 52D1 (OR52D1), found in Homo sapiens (Human).